The chain runs to 189 residues: uncharacterized protein (189 aa).

The HTH tetR-type domain occupies 9–69; that stretch reads ADTGGRILRA…SMLTSHIAAV (61 aa). The segment at residues 32–51 is a DNA-binding region (H-T-H motif); sequence TLAEIARRAGVSRPTVYRRW.

This is an uncharacterized protein from Mycobacterium bovis (strain ATCC BAA-935 / AF2122/97).